Reading from the N-terminus, the 288-residue chain is Co-chaperone protein DjlA (288 aa).

Over Met1–Lys6 the chain is Periplasmic. The helical transmembrane segment at Ile7–Ser30 threads the bilayer. At Ile31–Lys288 the chain is on the cytoplasmic side. Residues Asp222–Lys288 enclose the J domain.

In terms of assembly, homodimer.

The protein resides in the cell inner membrane. Its function is as follows. Regulatory DnaK co-chaperone. Direct interaction between DnaK and DjlA is needed for the induction of the wcaABCDE operon, involved in the synthesis of a colanic acid polysaccharide capsule, possibly through activation of the RcsB/RcsC phosphotransfer signaling pathway. The colanic acid capsule may help the bacterium survive conditions outside the host. This Haemophilus influenzae (strain ATCC 51907 / DSM 11121 / KW20 / Rd) protein is Co-chaperone protein DjlA.